The primary structure comprises 244 residues: Phosphoadenosine 5'-phosphosulfate reductase (244 aa).

Cys239 (nucleophile; cysteine thiosulfonate intermediate) is an active-site residue.

Belongs to the PAPS reductase family. CysH subfamily.

It is found in the cytoplasm. The catalysed reaction is [thioredoxin]-disulfide + sulfite + adenosine 3',5'-bisphosphate + 2 H(+) = [thioredoxin]-dithiol + 3'-phosphoadenylyl sulfate. It participates in sulfur metabolism; hydrogen sulfide biosynthesis; sulfite from sulfate: step 3/3. Its function is as follows. Catalyzes the formation of sulfite from phosphoadenosine 5'-phosphosulfate (PAPS) using thioredoxin as an electron donor. This chain is Phosphoadenosine 5'-phosphosulfate reductase, found in Salmonella dublin (strain CT_02021853).